Consider the following 311-residue polypeptide: Cytosolic Fe-S cluster assembly factor Nubp1 homolog (311 aa).

[4Fe-4S] cluster contacts are provided by Cys9, Cys23, Cys26, and Cys32. Position 63 to 70 (Gly63 to Ser70) interacts with ATP. 2 residues coordinate [4Fe-4S] cluster: Cys240 and Cys243.

This sequence belongs to the Mrp/NBP35 ATP-binding proteins family. NUBP1/NBP35 subfamily. As to quaternary structure, heterotetramer of 2 Nubp1 and 2 Nubp2 chains. The cofactor is [4Fe-4S] cluster.

The protein localises to the cytoplasm. In terms of biological role, component of the cytosolic iron-sulfur (Fe/S) protein assembly (CIA) machinery. Required for maturation of extramitochondrial Fe-S proteins. The Nubp1-Nubp2 heterotetramer forms a Fe-S scaffold complex, mediating the de novo assembly of an Fe-S cluster and its transfer to target apoproteins. The chain is Cytosolic Fe-S cluster assembly factor Nubp1 homolog from Drosophila erecta (Fruit fly).